The sequence spans 550 residues: Glucose-6-phosphate isomerase (550 aa).

The active-site Proton donor is the E356. Residues H387 and K515 contribute to the active site.

This sequence belongs to the GPI family.

It is found in the cytoplasm. It catalyses the reaction alpha-D-glucose 6-phosphate = beta-D-fructose 6-phosphate. The protein operates within carbohydrate biosynthesis; gluconeogenesis. Its pathway is carbohydrate degradation; glycolysis; D-glyceraldehyde 3-phosphate and glycerone phosphate from D-glucose: step 2/4. In terms of biological role, catalyzes the reversible isomerization of glucose-6-phosphate to fructose-6-phosphate. This Vibrio vulnificus (strain YJ016) protein is Glucose-6-phosphate isomerase.